Here is a 366-residue protein sequence, read N- to C-terminus: Left-right determination factor 1 (366 aa).

A signal peptide spans 1–21 (MQPLWLCWALWVLPLASPGAA). The propeptide at 22–76 (LTGEQLLGSLLRQLQLKEVPTLDRADMEELVIPTHVRAQYVALLQRSHGDRSRGK) is or 135. N-linked (GlcNAc...) asparagine glycosylation occurs at N158. 4 disulfide bridges follow: C251–C264, C263–C316, C293–C351, and C297–C353.

It belongs to the TGF-beta family. Post-translationally, the processing of the protein may also occur at the second R-X-X-R site located at AA 132-135. Processing appears to be regulated in a cell-type specific manner.

The protein resides in the secreted. In terms of biological role, required for left-right axis determination as a regulator of LEFTY2 and NODAL. This is Left-right determination factor 1 (LEFTY1) from Homo sapiens (Human).